We begin with the raw amino-acid sequence, 404 residues long: Probable oxalate decarboxylase ARB_04859 (404 aa).

Residues 1-17 form the signal peptide; it reads MKYSAVLVAALAAIADA. The Cupin type-1 1 domain occupies 74-215; sequence FSLSKTRMLY…NFGVPPSTFD (142 aa). Mn(2+)-binding residues include His117, His119, Glu123, and His162. Asn226 and Asn244 each carry an N-linked (GlcNAc...) asparagine glycan. The region spanning 249-393 is the Cupin type-1 2 domain; it reads FHISNAPEIQ…AINVPIEVIE (145 aa). Mn(2+) contacts are provided by His296, His298, Glu303, and His342. N-linked (GlcNAc...) asparagine glycosylation is present at Asn346. The active-site Proton donor is the Glu357.

Mn(2+) serves as cofactor.

The protein resides in the secreted. It catalyses the reaction oxalate + H(+) = formate + CO2. In terms of biological role, converts oxalate to formate and CO(2) in an O(2)-dependent reaction. Can also catalyze minor side reactions: oxalate oxidation to produce H(2)O(2), and oxalate-dependent, H(2)O(2)-independent dye oxidations. The polypeptide is Probable oxalate decarboxylase ARB_04859 (Arthroderma benhamiae (strain ATCC MYA-4681 / CBS 112371) (Trichophyton mentagrophytes)).